Here is a 103-residue protein sequence, read N- to C-terminus: Pyrimidine/purine nucleoside phosphorylase (103 aa).

Belongs to the nucleoside phosphorylase PpnP family.

It carries out the reaction a purine D-ribonucleoside + phosphate = a purine nucleobase + alpha-D-ribose 1-phosphate. The catalysed reaction is adenosine + phosphate = alpha-D-ribose 1-phosphate + adenine. It catalyses the reaction cytidine + phosphate = cytosine + alpha-D-ribose 1-phosphate. The enzyme catalyses guanosine + phosphate = alpha-D-ribose 1-phosphate + guanine. It carries out the reaction inosine + phosphate = alpha-D-ribose 1-phosphate + hypoxanthine. The catalysed reaction is thymidine + phosphate = 2-deoxy-alpha-D-ribose 1-phosphate + thymine. It catalyses the reaction uridine + phosphate = alpha-D-ribose 1-phosphate + uracil. The enzyme catalyses xanthosine + phosphate = alpha-D-ribose 1-phosphate + xanthine. Catalyzes the phosphorolysis of diverse nucleosides, yielding D-ribose 1-phosphate and the respective free bases. Can use uridine, adenosine, guanosine, cytidine, thymidine, inosine and xanthosine as substrates. Also catalyzes the reverse reactions. The chain is Pyrimidine/purine nucleoside phosphorylase from Shewanella baltica (strain OS155 / ATCC BAA-1091).